A 639-amino-acid polypeptide reads, in one-letter code: Homeobox protein 9 (639 aa).

Disordered regions lie at residues 1-45 (MLNS…DKQN), 66-144 (SPNH…DDNS), 157-179 (NQNQNQNQNQNQNQNQNQNQNQN), 262-313 (PRTL…SSGT), 331-422 (SESS…QTSN), and 436-547 (TNKN…NNEN). Residues 72–109 (ANNNNNNNNNNNNNNNNNNNNNNNNNNNNNNNNNNNIQ) adopt a coiled-coil conformation. 2 stretches are compositionally biased toward low complexity: residues 73–119 (NNNN…SNNN) and 126–142 (GSLNSSNDNNFNSGNDD). Coiled-coil stretches lie at residues 152–184 (SNQNQNQNQNQNQNQNQNQNQNQNQNQNQKDSW) and 230–296 (EIEI…NINE). Residues 266-300 (NNSSDSISENINNNNNNNNNNNNNNNNNINESNIN) show a composition bias toward low complexity. A compositionally biased stretch (basic and acidic residues) spans 345–354 (QPRKVPRDLN). Over residues 358–399 (NNNINYANNNNNNNNNNNNNNHNNNINNNNNNNNNNNNNSNN) the composition is skewed to low complexity. Positions 365–396 (NNNNNNNNNNNNNNHNNNINNNNNNNNNNNNN) form a coiled coil. Residues 405–422 (GSITNSVNIKPSKDQTSN) are compositionally biased toward polar residues. Over residues 436 to 526 (TNKNNNNNNN…NNNLTSSSNN (91 aa)) the composition is skewed to low complexity. Residues 532–547 (GNTSPNQSSANGNNEN) show a composition bias toward polar residues. Residues 559 to 621 (KRKKRGKLPG…NARRRILPRQ (63 aa)) constitute a DNA-binding region (homeobox).

The protein localises to the nucleus. Its function is as follows. Putative transcription factor. The protein is Homeobox protein 9 (hbx9) of Dictyostelium discoideum (Social amoeba).